Here is a 141-residue protein sequence, read N- to C-terminus: Transcriptional regulator MraZ (141 aa).

SpoVT-AbrB domains lie at 5–47 and 76–119; these read EFEH…PAER and AAEC…GAEH.

Belongs to the MraZ family. In terms of assembly, forms oligomers.

It is found in the cytoplasm. It localises to the nucleoid. The chain is Transcriptional regulator MraZ from Lactiplantibacillus plantarum (strain ATCC BAA-793 / NCIMB 8826 / WCFS1) (Lactobacillus plantarum).